Here is a 67-residue protein sequence, read N- to C-terminus: COP9 signalosome complex subunit 9 homolog (67 aa).

The segment at 1-31 (MKPSLAADEMFSEGPGYMEMDESGGATGMMM) is disordered.

Belongs to the CSN9 family. As to quaternary structure, probable component of the COP9 signalosome (CSN) complex.

In terms of biological role, component of the COP9 signalosome complex (CSN), a complex involved in various cellular and developmental processes. The CSN complex is an essential regulator of the ubiquitin (Ubl) conjugation pathway by mediating the deneddylation of the cullin subunits of SCF-type E3 ligase complexes, leading to decrease the Ubl ligase activity. The protein is COP9 signalosome complex subunit 9 homolog of Drosophila melanogaster (Fruit fly).